Reading from the N-terminus, the 342-residue chain is Holliday junction branch migration complex subunit RuvB (342 aa).

The large ATPase domain (RuvB-L) stretch occupies residues 1-181; it reads MENRMVTPFD…FGMLCAMEFY (181 aa). Residues Leu-20, Arg-21, Gly-62, Lys-65, Thr-66, Thr-67, 128–130, Arg-171, Tyr-181, and Arg-218 contribute to the ATP site; that span reads EDY. Thr-66 lines the Mg(2+) pocket. Positions 182-252 are small ATPAse domain (RuvB-S); it reads TDEELMEIVV…GAKAALDLLE (71 aa). The head domain (RuvB-H) stretch occupies residues 255-342; sequence KEGLDKIDNK…KDNQVSIFNK (88 aa). 2 residues coordinate DNA: Arg-310 and Arg-315.

This sequence belongs to the RuvB family. Homohexamer. Forms an RuvA(8)-RuvB(12)-Holliday junction (HJ) complex. HJ DNA is sandwiched between 2 RuvA tetramers; dsDNA enters through RuvA and exits via RuvB. An RuvB hexamer assembles on each DNA strand where it exits the tetramer. Each RuvB hexamer is contacted by two RuvA subunits (via domain III) on 2 adjacent RuvB subunits; this complex drives branch migration. In the full resolvosome a probable DNA-RuvA(4)-RuvB(12)-RuvC(2) complex forms which resolves the HJ.

The protein resides in the cytoplasm. The catalysed reaction is ATP + H2O = ADP + phosphate + H(+). Its function is as follows. The RuvA-RuvB-RuvC complex processes Holliday junction (HJ) DNA during genetic recombination and DNA repair, while the RuvA-RuvB complex plays an important role in the rescue of blocked DNA replication forks via replication fork reversal (RFR). RuvA specifically binds to HJ cruciform DNA, conferring on it an open structure. The RuvB hexamer acts as an ATP-dependent pump, pulling dsDNA into and through the RuvAB complex. RuvB forms 2 homohexamers on either side of HJ DNA bound by 1 or 2 RuvA tetramers; 4 subunits per hexamer contact DNA at a time. Coordinated motions by a converter formed by DNA-disengaged RuvB subunits stimulates ATP hydrolysis and nucleotide exchange. Immobilization of the converter enables RuvB to convert the ATP-contained energy into a lever motion, pulling 2 nucleotides of DNA out of the RuvA tetramer per ATP hydrolyzed, thus driving DNA branch migration. The RuvB motors rotate together with the DNA substrate, which together with the progressing nucleotide cycle form the mechanistic basis for DNA recombination by continuous HJ branch migration. Branch migration allows RuvC to scan DNA until it finds its consensus sequence, where it cleaves and resolves cruciform DNA. This Clostridium botulinum (strain ATCC 19397 / Type A) protein is Holliday junction branch migration complex subunit RuvB.